Here is a 296-residue protein sequence, read N- to C-terminus: Bifunctional protein FolD (296 aa).

NADP(+) is bound by residues Gly168–Ser170, Thr197, and Val238.

Belongs to the tetrahydrofolate dehydrogenase/cyclohydrolase family. In terms of assembly, homodimer.

The catalysed reaction is (6R)-5,10-methylene-5,6,7,8-tetrahydrofolate + NADP(+) = (6R)-5,10-methenyltetrahydrofolate + NADPH. It catalyses the reaction (6R)-5,10-methenyltetrahydrofolate + H2O = (6R)-10-formyltetrahydrofolate + H(+). It participates in one-carbon metabolism; tetrahydrofolate interconversion. In terms of biological role, catalyzes the oxidation of 5,10-methylenetetrahydrofolate to 5,10-methenyltetrahydrofolate and then the hydrolysis of 5,10-methenyltetrahydrofolate to 10-formyltetrahydrofolate. The sequence is that of Bifunctional protein FolD from Desulfotalea psychrophila (strain LSv54 / DSM 12343).